A 1188-amino-acid polypeptide reads, in one-letter code: Probable RNA helicase armi (1188 aa).

Residue 723–730 participates in ATP binding; that stretch reads GPPGSGKT. The DEAG box signature appears at 862–865; the sequence is DEAG.

Belongs to the DNA2/NAM7 helicase family. SDE3 subfamily. Forms a complex with piwi and fs(1)Yb; this interaction is required for proper piRNA loading and nuclear localization of piwi. The interaction of piwi and fs(1)Yb is likely to occur via armi. As to expression, abundant in oocytes and syncytial blastoderm. Expressed at low level throughout development, including somatic tissues. First apparent early in oogenesis, in the cytoplasm of stem cells and mitotically dividing cystoblasts. In regions 2a and 2b of the germarium, it is most concentrated in the center of the germline cysts, where the pro-oocyte is located. In stage 1 and early stage 2 egg chambers, it accumulates at the anterior of the oocyte, near the ring canals. It also extends through the ring canals forming a branched structure that links the early oocyte with adjacent nurse cells. In stage 3 cysts, it accumulates at the posterior cortex and localizes to extensions that pass through the oocyte into the nurse cells. Through stages 4 to 7, it continues to be somewhat enriched at the posterior cortex of the oocyte, but at significantly lower level. In stage 9 to 10 egg chambers, it is found throughout the cytoplasm of the oocyte and nurse cells, with slight enrichment at the oocyte cortex.

The protein localises to the cytoplasm. It carries out the reaction ATP + H2O = ADP + phosphate + H(+). Probable RNA helicase required for axial polarization of the oocyte during early and mid oogenesis. Plays a central role in RNA interference (RNAi) process, a process that mediates mRNA destruction of translational repression. Required for the assembly of the RISC complex, a complex required for target RNA destruction or repression. May be required in the RISC assembly to unwind miRNAs, in the production of single-stranded miRNA from the double-stranded miRNA, a key step in RISC formation. Required both for the translational control of oskar (osk) mRNA and cytoskeletal polarization in the oocyte. Required for somatic primary piRNA biogenesis. Involved in repression of long interspersed nuclear elements (LINEs) including HeT-A, I-element and TART LINEs. The polypeptide is Probable RNA helicase armi (Drosophila melanogaster (Fruit fly)).